A 229-amino-acid chain; its full sequence is Large ribosomal subunit protein uL1 (229 aa).

The protein belongs to the universal ribosomal protein uL1 family. Part of the 50S ribosomal subunit.

In terms of biological role, binds directly to 23S rRNA. The L1 stalk is quite mobile in the ribosome, and is involved in E site tRNA release. Its function is as follows. Protein L1 is also a translational repressor protein, it controls the translation of the L11 operon by binding to its mRNA. This chain is Large ribosomal subunit protein uL1, found in Clostridium tetani (strain Massachusetts / E88).